Consider the following 340-residue polypeptide: Dual specificity protein phosphatase 12 (340 aa).

Met1 is modified (N-acetylmethionine). The 146-residue stretch at 26–171 folds into the Tyrosine-protein phosphatase domain; that stretch reads QMLEVQPGLY…LKLYQAMGYE (146 aa). Catalysis depends on Cys115, which acts as the Phosphocysteine intermediate. Residue 116 to 121 coordinates substrate; it reads HAGVSR. The residue at position 335 (Ser335) is a Phosphoserine.

Belongs to the protein-tyrosine phosphatase family. Non-receptor class dual specificity subfamily. Monomer. Zn(2+) is required as a cofactor. As to expression, ubiquitous, highest expression in spleen, testis, ovary, and peripheral blood leukocytes and lower expression in liver and lung.

Its subcellular location is the nucleus. The protein localises to the cytoplasm. It localises to the cytosol. The catalysed reaction is O-phospho-L-tyrosyl-[protein] + H2O = L-tyrosyl-[protein] + phosphate. It catalyses the reaction O-phospho-L-seryl-[protein] + H2O = L-seryl-[protein] + phosphate. The enzyme catalyses O-phospho-L-threonyl-[protein] + H2O = L-threonyl-[protein] + phosphate. Functionally, dual specificity phosphatase; can dephosphorylate both phosphotyrosine and phosphoserine or phosphothreonine residues. Can dephosphorylate glucokinase (in vitro). Has phosphatase activity with the synthetic substrate 6,8-difluoro-4-methylumbelliferyl phosphate and other in vitro substrates. In Homo sapiens (Human), this protein is Dual specificity protein phosphatase 12 (DUSP12).